We begin with the raw amino-acid sequence, 403 residues long: Protein-export membrane protein SecD (403 aa).

The next 6 helical transmembrane spans lie at 14–34, 238–258, 265–285, 294–314, 336–356, and 365–385; these read VILL…MGIQ, FAEG…VILI, ILVL…LGAA, LAAI…QIII, FFII…LAYI, and IGLL…GVFI.

This sequence belongs to the SecD/SecF family. SecD subfamily. Part of the protein translocation apparatus. Forms a complex with SecF.

The protein resides in the cell membrane. In terms of biological role, involved in protein export. This chain is Protein-export membrane protein SecD, found in Methanothermobacter thermautotrophicus (strain ATCC 29096 / DSM 1053 / JCM 10044 / NBRC 100330 / Delta H) (Methanobacterium thermoautotrophicum).